A 108-amino-acid chain; its full sequence is uncharacterized protein (108 aa).

The interval 1–23 (MVDELEKNQVQPQETEENKENAL) is disordered.

This is an uncharacterized protein from Ureaplasma parvum serovar 3 (strain ATCC 700970).